Here is a 567-residue protein sequence, read N- to C-terminus: Oxygen-dependent choline dehydrogenase (567 aa).

Aspartate 4 to glutamate 33 is an FAD binding site. Histidine 473 (proton acceptor) is an active-site residue.

It belongs to the GMC oxidoreductase family. Requires FAD as cofactor.

It carries out the reaction choline + A = betaine aldehyde + AH2. The catalysed reaction is betaine aldehyde + NAD(+) + H2O = glycine betaine + NADH + 2 H(+). It functions in the pathway amine and polyamine biosynthesis; betaine biosynthesis via choline pathway; betaine aldehyde from choline (cytochrome c reductase route): step 1/1. In terms of biological role, involved in the biosynthesis of the osmoprotectant glycine betaine. Catalyzes the oxidation of choline to betaine aldehyde and betaine aldehyde to glycine betaine at the same rate. The protein is Oxygen-dependent choline dehydrogenase of Yersinia pseudotuberculosis serotype IB (strain PB1/+).